The following is a 340-amino-acid chain: UDP-3-O-acylglucosamine N-acyltransferase (340 aa).

H238 functions as the Proton acceptor in the catalytic mechanism.

This sequence belongs to the transferase hexapeptide repeat family. LpxD subfamily. Homotrimer.

The enzyme catalyses a UDP-3-O-[(3R)-3-hydroxyacyl]-alpha-D-glucosamine + a (3R)-hydroxyacyl-[ACP] = a UDP-2-N,3-O-bis[(3R)-3-hydroxyacyl]-alpha-D-glucosamine + holo-[ACP] + H(+). It functions in the pathway bacterial outer membrane biogenesis; LPS lipid A biosynthesis. Functionally, catalyzes the N-acylation of UDP-3-O-acylglucosamine using 3-hydroxyacyl-ACP as the acyl donor. Is involved in the biosynthesis of lipid A, a phosphorylated glycolipid that anchors the lipopolysaccharide to the outer membrane of the cell. In Shewanella denitrificans (strain OS217 / ATCC BAA-1090 / DSM 15013), this protein is UDP-3-O-acylglucosamine N-acyltransferase.